Consider the following 485-residue polypeptide: Adenosylhomocysteinase (485 aa).

3 residues coordinate substrate: Thr64, Asp139, and Glu205. Thr206 to Thr208 contacts NAD(+). Substrate-binding residues include Lys235 and Asp239. Residues Asn240, Gly269 to Gly274, Glu292, Asn327, Ile348 to His350, and Asn397 contribute to the NAD(+) site.

Belongs to the adenosylhomocysteinase family. The cofactor is NAD(+).

The enzyme catalyses S-adenosyl-L-homocysteine + H2O = L-homocysteine + adenosine. It participates in amino-acid biosynthesis; L-homocysteine biosynthesis; L-homocysteine from S-adenosyl-L-homocysteine: step 1/1. Adenosylhomocysteine is a competitive inhibitor of S-adenosyl-L-methionine-dependent methyl transferase reactions; therefore adenosylhomocysteinase may play a key role in the control of methylations via regulation of the intracellular concentration of adenosylhomocysteine. The protein is Adenosylhomocysteinase (SAHH) of Nicotiana sylvestris (Wood tobacco).